An 89-amino-acid polypeptide reads, in one-letter code: Small ribosomal subunit protein uS15 (89 aa).

The protein belongs to the universal ribosomal protein uS15 family. As to quaternary structure, part of the 30S ribosomal subunit. Forms a bridge to the 50S subunit in the 70S ribosome, contacting the 23S rRNA.

Its function is as follows. One of the primary rRNA binding proteins, it binds directly to 16S rRNA where it helps nucleate assembly of the platform of the 30S subunit by binding and bridging several RNA helices of the 16S rRNA. Forms an intersubunit bridge (bridge B4) with the 23S rRNA of the 50S subunit in the ribosome. The protein is Small ribosomal subunit protein uS15 of Anaeromyxobacter sp. (strain Fw109-5).